Consider the following 126-residue polypeptide: Protein C10 (126 aa).

At A2 the chain carries N-acetylalanine.

Belongs to the UPF0456 family. In terms of tissue distribution, ubiquitously expressed, with higher expression in lung.

Its subcellular location is the cytoplasm. Its function is as follows. In brain, may be required for corpus callosum development. The protein is Protein C10 (Grcc10) of Mus musculus (Mouse).